The primary structure comprises 66 residues: Large ribosomal subunit protein bL33c (66 aa).

It belongs to the bacterial ribosomal protein bL33 family.

The protein resides in the plastid. It is found in the chloroplast. This Nandina domestica (Heavenly bamboo) protein is Large ribosomal subunit protein bL33c.